Consider the following 135-residue polypeptide: Ribonuclease P protein component (135 aa).

It belongs to the RnpA family. Consists of a catalytic RNA component (M1 or rnpB) and a protein subunit.

The catalysed reaction is Endonucleolytic cleavage of RNA, removing 5'-extranucleotides from tRNA precursor.. RNaseP catalyzes the removal of the 5'-leader sequence from pre-tRNA to produce the mature 5'-terminus. It can also cleave other RNA substrates such as 4.5S RNA. The protein component plays an auxiliary but essential role in vivo by binding to the 5'-leader sequence and broadening the substrate specificity of the ribozyme. The sequence is that of Ribonuclease P protein component from Pseudomonas paraeruginosa (strain DSM 24068 / PA7) (Pseudomonas aeruginosa (strain PA7)).